The primary structure comprises 459 residues: MHNIHRRNFLKAAGAATAGLVTANIALNAYASSVAPKPQAGKSVIGLIAPKMDVVRVGFIGVGERGFSHVEQFCHLEGVELKAICDTHQAVLDRAIDHIVKQNRPKPAVYTGNDLSYRDLLSRDDIDIVIISTPWEWHAPMAIETMESGKHTFVEVPMALTVEECWQVVDTAERTQKNCMMMENVNYGREELMVLNMVRQGVFGELLHGEAAYIHELRWQMKEIDHKTGSWRTYWHTKRNGNLYPTHGLGPVSQYMNINRGDRFDYLTSMSSPALGRALYAKREFPADHERNQLKYINGDINTSLIKTVKGRTIMVQHDTTTPRPYSRHNLIQGTNGVFAGFPNRIAVENGGFGQSYHEWDMDMQKWYDKYDHPLWQRIGKEAEINGGHGGMDFVMLWRMIYCLRNGEALDQDVYDGASWSVVNILSEHSLNDRSNSVTFPDFTRGAWQTAKPLGIVGA.

A signal peptide (tat-type signal) is located at residues 1–31; that stretch reads MHNIHRRNFLKAAGAATAGLVTANIALNAYA. NAD(+) contacts are provided by residues 64-65, D86, 135-138, 155-156, and N184; these read ER, WEWH, and EV. Substrate is bound by residues Y213, R232, 244–247, and Y326; that span reads YPTH. Y244 is an NAD(+) binding site.

Belongs to the Gfo/Idh/MocA family. Glycosyl hydrolase 109 subfamily. Requires NAD(+) as cofactor. Predicted to be exported by the Tat system. The position of the signal peptide cleavage has not been experimentally proven.

In terms of biological role, glycosidase. The sequence is that of Glycosyl hydrolase family 109 protein from Shewanella baltica (strain OS195).